The chain runs to 393 residues: Digeranylgeranylglycerophospholipid reductase (393 aa).

Residues Ala-13, Asp-32, Cys-43, Ala-44, Gly-46, Arg-95, Val-119, Asp-274, and Gly-286 each contribute to the FAD site. Arg-327 and Gly-363 together coordinate a 2,3-bis-O-(geranylgeranyl)-sn-glycerol 1-phospholipid.

This sequence belongs to the geranylgeranyl reductase family. DGGGPL reductase subfamily. It depends on FAD as a cofactor.

It carries out the reaction a 2,3-bis-O-phytanyl-sn-glycerol 1-phospholipid + 8 A = a 2,3-bis-O-(geranylgeranyl)-sn-glycerol 1-phospholipid + 8 AH2. It catalyses the reaction 2,3-bis-O-(phytanyl)-sn-glycerol 1-phosphate + 8 A = 2,3-bis-O-(geranylgeranyl)-sn-glycerol 1-phosphate + 8 AH2. The enzyme catalyses CDP-2,3-bis-O-(geranylgeranyl)-sn-glycerol + 8 AH2 = CDP-2,3-bis-O-(phytanyl)-sn-glycerol + 8 A. The catalysed reaction is archaetidylserine + 8 AH2 = 2,3-bis-O-phytanyl-sn-glycero-3-phospho-L-serine + 8 A. It functions in the pathway membrane lipid metabolism; glycerophospholipid metabolism. In terms of biological role, is involved in the reduction of 2,3-digeranylgeranylglycerophospholipids (unsaturated archaeols) into 2,3-diphytanylglycerophospholipids (saturated archaeols) in the biosynthesis of archaeal membrane lipids. Catalyzes the formation of archaetidic acid (2,3-di-O-phytanyl-sn-glyceryl phosphate) from 2,3-di-O-geranylgeranylglyceryl phosphate (DGGGP) via the hydrogenation of each double bond of the isoprenoid chains. Is also probably able to reduce double bonds of geranyl groups in CDP-2,3-bis-O-(geranylgeranyl)-sn-glycerol and archaetidylserine, thus acting at various stages in the biosynthesis of archaeal membrane lipids. The sequence is that of Digeranylgeranylglycerophospholipid reductase from Pyrococcus horikoshii (strain ATCC 700860 / DSM 12428 / JCM 9974 / NBRC 100139 / OT-3).